The primary structure comprises 453 residues: Glutamyl-tRNA(Gln) amidotransferase subunit A (453 aa).

Residues Lys-56 and Ser-131 each act as charge relay system in the active site. The active-site Acyl-ester intermediate is the Ser-155.

The protein belongs to the amidase family. GatA subfamily. In terms of assembly, heterotrimer of A, B and C subunits.

It carries out the reaction L-glutamyl-tRNA(Gln) + L-glutamine + ATP + H2O = L-glutaminyl-tRNA(Gln) + L-glutamate + ADP + phosphate + H(+). In terms of biological role, allows the formation of correctly charged Gln-tRNA(Gln) through the transamidation of misacylated Glu-tRNA(Gln) in organisms which lack glutaminyl-tRNA synthetase. The reaction takes place in the presence of glutamine and ATP through an activated gamma-phospho-Glu-tRNA(Gln). This Campylobacter jejuni subsp. jejuni serotype O:6 (strain 81116 / NCTC 11828) protein is Glutamyl-tRNA(Gln) amidotransferase subunit A.